We begin with the raw amino-acid sequence, 141 residues long: Large ribosomal subunit protein uL11 (141 aa).

The protein belongs to the universal ribosomal protein uL11 family. Part of the ribosomal stalk of the 50S ribosomal subunit. Interacts with L10 and the large rRNA to form the base of the stalk. L10 forms an elongated spine to which L12 dimers bind in a sequential fashion forming a multimeric L10(L12)X complex. In terms of processing, one or more lysine residues are methylated.

In terms of biological role, forms part of the ribosomal stalk which helps the ribosome interact with GTP-bound translation factors. The protein is Large ribosomal subunit protein uL11 of Streptococcus thermophilus (strain CNRZ 1066).